Consider the following 476-residue polypeptide: Bifunctional protein HldE (476 aa).

The tract at residues 1–318 (MKPILPDYNS…AEAVHGSQDT (318 aa)) is ribokinase. Position 195–198 (195–198 (NMKE)) interacts with ATP. Asp264 is a catalytic residue. The segment at 344–476 (MTNGCFDILH…IINAIKGGKG (133 aa)) is cytidylyltransferase.

The protein in the N-terminal section; belongs to the carbohydrate kinase PfkB family. This sequence in the C-terminal section; belongs to the cytidylyltransferase family. In terms of assembly, homodimer.

The catalysed reaction is D-glycero-beta-D-manno-heptose 7-phosphate + ATP = D-glycero-beta-D-manno-heptose 1,7-bisphosphate + ADP + H(+). It catalyses the reaction D-glycero-beta-D-manno-heptose 1-phosphate + ATP + H(+) = ADP-D-glycero-beta-D-manno-heptose + diphosphate. The protein operates within nucleotide-sugar biosynthesis; ADP-L-glycero-beta-D-manno-heptose biosynthesis; ADP-L-glycero-beta-D-manno-heptose from D-glycero-beta-D-manno-heptose 7-phosphate: step 1/4. It participates in nucleotide-sugar biosynthesis; ADP-L-glycero-beta-D-manno-heptose biosynthesis; ADP-L-glycero-beta-D-manno-heptose from D-glycero-beta-D-manno-heptose 7-phosphate: step 3/4. It functions in the pathway bacterial outer membrane biogenesis; LPS core biosynthesis. In terms of biological role, catalyzes the phosphorylation of D-glycero-D-manno-heptose 7-phosphate at the C-1 position to selectively form D-glycero-beta-D-manno-heptose-1,7-bisphosphate. Its function is as follows. Catalyzes the ADP transfer from ATP to D-glycero-beta-D-manno-heptose 1-phosphate, yielding ADP-D-glycero-beta-D-manno-heptose. The polypeptide is Bifunctional protein HldE (Vibrio parahaemolyticus serotype O3:K6 (strain RIMD 2210633)).